A 396-amino-acid polypeptide reads, in one-letter code: Pre-mRNA-splicing regulator WTAP (396 aa).

M1 carries the post-translational modification N-acetylmethionine. S14 bears the Phosphoserine mark. 2 stretches are compositionally biased toward low complexity: residues 240–257 (QQQQ…TTSS) and 278–291 (SNGS…SGSG). Residues 240-396 (QQQQSQASAP…SSVNVQGAVL (157 aa)) are disordered. Phosphoserine occurs at positions 297, 305, 306, and 341. Over residues 305–316 (SSSGNGNKASNS) the composition is skewed to low complexity. Polar residues predominate over residues 340–351 (DSPTGSENSLTH). Residue T350 is modified to Phosphothreonine. Positions 352 to 368 (HSNDTDSSHDPQEEKAV) are enriched in basic and acidic residues. Residues 380-396 (HVQNGLDSSVNVQGAVL) are compositionally biased toward polar residues. Phosphoserine is present on S388.

This sequence belongs to the fl(2)d family. In terms of assembly, component of the WMM complex, a N6-methyltransferase complex composed of a catalytic subcomplex, named MAC, and of an associated subcomplex, named MACOM. The MAC subcomplex is composed of METTL3 and METTL14. The MACOM subcomplex is composed of WTAP, ZC3H13, CBLL1/HAKAI, VIRMA, and, in some cases of RBM15 (RBM15 or RBM15B). Interacts with WT1. Also a component of a MACOM-like complex, named WTAP complex, composed of WTAP, ZC3H13, CBLL1, VIRMA, RBM15, BCLAF1 and THRAP3. Interacts with CPNE4 (via VWFA domain).

The protein localises to the nucleus speckle. Its subcellular location is the nucleus. It is found in the nucleoplasm. It localises to the cytoplasm. Functionally, associated component of the WMM complex, a complex that mediates N6-methyladenosine (m6A) methylation of RNAs, a modification that plays a role in the efficiency of mRNA splicing and RNA processing. Acts as a key regulator of m6A methylation by promoting m6A methylation of mRNAs at the 3'-UTR. Required for accumulation of METTL3 and METTL14 to nuclear speckle. Acts as a mRNA splicing regulator. Regulates G2/M cell-cycle transition by binding to the 3' UTR of CCNA2, which enhances its stability. Impairs WT1 DNA-binding ability and inhibits expression of WT1 target genes. The protein is Pre-mRNA-splicing regulator WTAP of Mus musculus (Mouse).